The primary structure comprises 197 residues: ATP synthase protein MI25 (197 aa).

The helical transmembrane segment at 30-50 (ISIYNEEMIVARCFIGFLIFS) threads the bilayer.

It belongs to the ATPase protein MI25 family. As to quaternary structure, F-type ATPases have 2 components, CF(1) - the catalytic core - and CF(0) - the membrane proton channel. CF(1) has five subunits: alpha(3), beta(3), gamma(1), delta(1), epsilon(1). CF(0) has three main subunits: a, b and c.

It localises to the mitochondrion membrane. In terms of biological role, this is one of the chains of the nonenzymatic component (CF(0) subunit) of the mitochondrial ATPase complex. The protein is ATP synthase protein MI25 of Oryza sativa subsp. indica (Rice).